Reading from the N-terminus, the 452-residue chain is GTPase Der (452 aa).

2 EngA-type G domains span residues 4 to 169 (PIVA…PSPD) and 177 to 352 (INVS…EEHR). GTP-binding positions include 10-17 (GRPNVGKS), 57-61 (DTGGL), 120-123 (NKCE), 183-190 (GRPNVGKS), 230-234 (DTAGI), and 295-298 (NKWD). The region spanning 353 to 438 (RRVNTSVVNE…PIRLLWRGKK (86 aa)) is the KH-like domain.

This sequence belongs to the TRAFAC class TrmE-Era-EngA-EngB-Septin-like GTPase superfamily. EngA (Der) GTPase family. In terms of assembly, associates with the 50S ribosomal subunit.

Its function is as follows. GTPase that plays an essential role in the late steps of ribosome biogenesis. The protein is GTPase Der of Crocosphaera subtropica (strain ATCC 51142 / BH68) (Cyanothece sp. (strain ATCC 51142)).